Reading from the N-terminus, the 417-residue chain is Cyanophycinase (417 aa).

Positions 1–23 (MIRSFIRSSALLLALLPVTGYSA) are cleaved as a signal peptide. Residues S169, D188, and H222 each act as charge relay system in the active site.

Belongs to the peptidase S51 family.

The protein resides in the secreted. It carries out the reaction [L-4-(L-arginin-2-N-yl)aspartate](n) + H2O = [L-4-(L-arginin-2-N-yl)aspartate](n-1) + L-4-(L-arginin-2-N-yl)aspartate. With respect to regulation, inhibited by serine protease inhibitors. Inhibited by N-Bromo-succinimide. Functionally, exopeptidase that catalyzes the hydrolytic cleavage of multi-L-arginyl-poly-L-aspartic acid (cyanophycin; a water-insoluble reserve polymer) into aspartate-arginine dipeptides. In Pseudomonas anguilliseptica, this protein is Cyanophycinase (cphE).